The primary structure comprises 269 residues: [LysW]-aminoadipate kinase (269 aa).

ATP is bound at residue 5-8 (KVGG). Residue Arg-64 participates in substrate binding. Tyr-78 is an ATP binding site. Asn-168 contributes to the substrate binding site.

The protein belongs to the acetylglutamate kinase family. LysZ subfamily.

It is found in the cytoplasm. The enzyme catalyses [amino-group carrier protein]-C-terminal-N-(1,4-dicarboxybutan-1-yl)-L-glutamine + ATP = [amino-group carrier protein]-C-terminal-N-(1-carboxy-5-phosphooxy-5-oxopentan-1-yl)-L-glutamine + ADP. Its pathway is amino-acid biosynthesis; L-lysine biosynthesis via AAA pathway; L-lysine from L-alpha-aminoadipate (Thermus route): step 2/5. In terms of biological role, catalyzes the phosphorylation of LysW-gamma-alpha-aminoadipate. Does not phosphorylate N-acetyl-glutamate. The sequence is that of [LysW]-aminoadipate kinase from Thermus thermophilus (strain ATCC BAA-163 / DSM 7039 / HB27).